Consider the following 325-residue polypeptide: Germination protease (325 aa).

Positions 1–7 (MYNVRTD) are excised as a propeptide.

The protein belongs to the peptidase A25 family. Homotetramer. Post-translationally, autoproteolytically processed. The inactive tetrameric zymogen termed p46 autoprocesses to a smaller form termed p41, which is active only during spore germination.

It catalyses the reaction Endopeptidase action with P4 Glu or Asp, P1 preferably Glu &gt; Asp, P1' hydrophobic and P2' Ala.. Its function is as follows. Initiates the rapid degradation of small, acid-soluble proteins during spore germination. The sequence is that of Germination protease from Clostridium perfringens (strain ATCC 13124 / DSM 756 / JCM 1290 / NCIMB 6125 / NCTC 8237 / Type A).